A 227-amino-acid chain; its full sequence is Uracil-DNA glycosylase 2 (227 aa).

Asp67 serves as the catalytic Proton acceptor.

It belongs to the uracil-DNA glycosylase (UDG) superfamily. UNG family.

The protein localises to the cytoplasm. The catalysed reaction is Hydrolyzes single-stranded DNA or mismatched double-stranded DNA and polynucleotides, releasing free uracil.. Excises uracil residues from the DNA which can arise as a result of misincorporation of dUMP residues by DNA polymerase or due to deamination of cytosine. The chain is Uracil-DNA glycosylase 2 (ung2) from Streptomyces coelicolor (strain ATCC BAA-471 / A3(2) / M145).